The primary structure comprises 96 residues: Class I hydrophobin 3 (96 aa).

Positions 1–18 (MQFAKIASVLAMAAAAVA) are cleaved as a signal peptide. 4 disulfides stabilise this stretch: cysteine 43-cysteine 72, cysteine 51-cysteine 66, cysteine 52-cysteine 57, and cysteine 73-cysteine 92.

Belongs to the fungal hydrophobin family.

The protein resides in the secreted. It is found in the cell wall. Functionally, aerial growth, conidiation, and dispersal of filamentous fungi in the environment rely upon a capability of their secreting small amphipathic proteins called hydrophobins (HPBs) with low sequence identity. Class I can self-assemble into an outermost layer of rodlet bundles on aerial cell surfaces, conferring cellular hydrophobicity that supports fungal growth, development and dispersal; whereas Class II form highly ordered films at water-air interfaces through intermolecular interactions but contribute nothing to the rodlet structure. Does not seem to be important for the ability to cause seedling disease. This is Class I hydrophobin 3 from Gibberella moniliformis (Maize ear and stalk rot fungus).